The following is a 270-amino-acid chain: Checkpoint signal transducer rad24 (270 aa).

A phosphoserine mark is found at serine 34 and serine 66. The disordered stretch occupies residues 242–270 (AAAGGNTEGAQENAPSNAPEGEAEPKADA).

Belongs to the 14-3-3 family. Homodimer. Binds preferentially to mei2 phosphorylated by ran1/pat1. Binds preferentially to cdc25 phosphorylated by srk1 during G2; the interaction is increased during osmotic stress. Interacts with byr2. Interacts with rad25.

It localises to the cytoplasm. Functionally, acts in cell cycle and stress checkpoint signaling by sequestering signal transducers regulated by the checkpoints. Required for the DNA damage checkpoint that ensures that DNA damage is repaired before mitosis is attempted. During environmental stress, sequesters srk1-phosphorylated cdc25 in the cytoplasm to delay the G2/M transition. Sequesters byr2 in the cytoplasm to prevent its translocation to the plasma membrane. Sequesters ran1/pat1-phosphorylated mei2 from its non-coding RNA activators (including meiRNA), to prevent meiotic induction in vegetative cells and to regulate meiosis I. This chain is Checkpoint signal transducer rad24, found in Schizosaccharomyces pombe (strain 972 / ATCC 24843) (Fission yeast).